The sequence spans 217 residues: Imidazole glycerol phosphate synthase subunit HisH (217 aa).

The Glutamine amidotransferase type-1 domain maps to 3–217 (TIAIVDYGMG…IYRNFVHWKP (215 aa)). The active-site Nucleophile is Cys-82. Residues His-197 and Glu-199 contribute to the active site.

Heterodimer of HisH and HisF.

The protein resides in the cytoplasm. It catalyses the reaction 5-[(5-phospho-1-deoxy-D-ribulos-1-ylimino)methylamino]-1-(5-phospho-beta-D-ribosyl)imidazole-4-carboxamide + L-glutamine = D-erythro-1-(imidazol-4-yl)glycerol 3-phosphate + 5-amino-1-(5-phospho-beta-D-ribosyl)imidazole-4-carboxamide + L-glutamate + H(+). It carries out the reaction L-glutamine + H2O = L-glutamate + NH4(+). The protein operates within amino-acid biosynthesis; L-histidine biosynthesis; L-histidine from 5-phospho-alpha-D-ribose 1-diphosphate: step 5/9. Its function is as follows. IGPS catalyzes the conversion of PRFAR and glutamine to IGP, AICAR and glutamate. The HisH subunit catalyzes the hydrolysis of glutamine to glutamate and ammonia as part of the synthesis of IGP and AICAR. The resulting ammonia molecule is channeled to the active site of HisF. The sequence is that of Imidazole glycerol phosphate synthase subunit HisH from Ralstonia nicotianae (strain ATCC BAA-1114 / GMI1000) (Ralstonia solanacearum).